The sequence spans 232 residues: MRRAVVVFSGGQDSTTCLIQAINQYDEVHCVTFDYGQRHRAEIDVARNVSHFLGVVAHKVLDVTLLNELALSSLTRDNIPVPDHSESEKSAIPSTFVPGRNILFLTLAAIYAYQVEAEAVITGVCETDFSGYPDCRDEFVKALNKAVSLGIARDIRFETPLMWLNKAETWALSDYYQHLDFVRSQTLTCYNGIQGNGCGTCAACHLRANGLEQYLNAPEKIMTEMKAKTHLV.

Residue 8–18 (FSGGQDSTTCL) participates in ATP binding. Zn(2+)-binding residues include Cys189, Cys198, Cys201, and Cys204.

The protein belongs to the QueC family. Zn(2+) is required as a cofactor.

The enzyme catalyses 7-carboxy-7-deazaguanine + NH4(+) + ATP = 7-cyano-7-deazaguanine + ADP + phosphate + H2O + H(+). Its pathway is purine metabolism; 7-cyano-7-deazaguanine biosynthesis. Functionally, catalyzes the ATP-dependent conversion of 7-carboxy-7-deazaguanine (CDG) to 7-cyano-7-deazaguanine (preQ(0)). The chain is 7-cyano-7-deazaguanine synthase from Photorhabdus laumondii subsp. laumondii (strain DSM 15139 / CIP 105565 / TT01) (Photorhabdus luminescens subsp. laumondii).